A 158-amino-acid polypeptide reads, in one-letter code: NADH-quinone oxidoreductase subunit B 2 (158 aa).

Cysteine 37, cysteine 38, cysteine 102, and cysteine 132 together coordinate [4Fe-4S] cluster.

It belongs to the complex I 20 kDa subunit family. NDH-1 is composed of 14 different subunits. Subunits NuoB, C, D, E, F, and G constitute the peripheral sector of the complex. It depends on [4Fe-4S] cluster as a cofactor.

It localises to the cell inner membrane. It catalyses the reaction a quinone + NADH + 5 H(+)(in) = a quinol + NAD(+) + 4 H(+)(out). NDH-1 shuttles electrons from NADH, via FMN and iron-sulfur (Fe-S) centers, to quinones in the respiratory chain. Couples the redox reaction to proton translocation (for every two electrons transferred, four hydrogen ions are translocated across the cytoplasmic membrane), and thus conserves the redox energy in a proton gradient. The polypeptide is NADH-quinone oxidoreductase subunit B 2 (Nitrosospira multiformis (strain ATCC 25196 / NCIMB 11849 / C 71)).